The following is a 443-amino-acid chain: Probable D-serine dehydratase (443 aa).

The residue at position 116 (K116) is an N6-(pyridoxal phosphate)lysine.

It belongs to the serine/threonine dehydratase family. DsdA subfamily. It depends on pyridoxal 5'-phosphate as a cofactor.

The catalysed reaction is D-serine = pyruvate + NH4(+). This chain is Probable D-serine dehydratase, found in Bacillus cereus (strain G9842).